The following is a 240-amino-acid chain: Pathogenesis-related thaumatin-like protein 3.5 (240 aa).

The N-terminal stretch at 1-20 is a signal peptide; that stretch reads MASLRLATLAMMVLFGSCRA. Intrachain disulfides connect cysteine 31/cysteine 237, cysteine 79/cysteine 89, cysteine 94/cysteine 100, cysteine 145/cysteine 227, cysteine 150/cysteine 210, cysteine 158/cysteine 173, cysteine 177/cysteine 186, and cysteine 187/cysteine 197.

It belongs to the thaumatin family. In terms of tissue distribution, strongly expressed in pollen grains. Also present at weak levels in seedling roots, in sapling stems and in developing male strobili.

Functionally, may be involved in disease resistance. The protein is Pathogenesis-related thaumatin-like protein 3.5 of Cryptomeria japonica (Japanese cedar).